The chain runs to 151 residues: NADPH-dependent 7-cyano-7-deazaguanine reductase (151 aa).

Cys51 (thioimide intermediate) is an active-site residue. The active-site Proton donor is the Asp58. Substrate-binding positions include 73 to 75 and 92 to 93; these read VES and HE.

This sequence belongs to the GTP cyclohydrolase I family. QueF type 1 subfamily.

It is found in the cytoplasm. It carries out the reaction 7-aminomethyl-7-carbaguanine + 2 NADP(+) = 7-cyano-7-deazaguanine + 2 NADPH + 3 H(+). It participates in tRNA modification; tRNA-queuosine biosynthesis. In terms of biological role, catalyzes the NADPH-dependent reduction of 7-cyano-7-deazaguanine (preQ0) to 7-aminomethyl-7-deazaguanine (preQ1). The polypeptide is NADPH-dependent 7-cyano-7-deazaguanine reductase (Bacteroides thetaiotaomicron (strain ATCC 29148 / DSM 2079 / JCM 5827 / CCUG 10774 / NCTC 10582 / VPI-5482 / E50)).